We begin with the raw amino-acid sequence, 432 residues long: Bouquet formation protein 4 (432 aa).

The segment at 1–21 is disordered; sequence MTENEKSRSLPAERNPLYKDD. Residues 38–147 form the HTH APSES-type domain; that stretch reads EFPDGPATFV…SSTPSTYATP (110 aa). Positions 73-94 form a DNA-binding region, H-T-H motif; it reads ATSMFRSAFPKATQEEEDLEMR. Low complexity-rich tracts occupy residues 139-152 and 163-172; these read STPS…RPTA and ESSTSATTTS. 2 disordered regions span residues 139 to 283 and 364 to 384; these read STPS…GKIR and KSSI…FEEN. Residues 180–228 show a composition bias toward basic and acidic residues; sequence RLAEHLENSKKTILQHDNKEEDKEIHSEENETKDEIKSEKKEPEIKKQE. A compositionally biased stretch (polar residues) spans 229-241; sequence GGSSTEKVGQPSS.

Interacts with rap1.

The protein localises to the cytoplasm. It is found in the nucleus. The protein resides in the nucleus inner membrane. Functionally, connects telomeres to the nuclear envelop (NE) during both vegetative growth and meiosis. This connection ensures clustering of telomeres to the spindle pole body (SPB) when cells enter meiotic prophase. The protein is Bouquet formation protein 4 (bqt4) of Schizosaccharomyces pombe (strain 972 / ATCC 24843) (Fission yeast).